The primary structure comprises 503 residues: ATP synthase subunit alpha, chloroplastic (503 aa).

170–177 lines the ATP pocket; it reads GDRQTGKT.

It belongs to the ATPase alpha/beta chains family. As to quaternary structure, F-type ATPases have 2 components, CF(1) - the catalytic core - and CF(0) - the membrane proton channel. CF(1) has five subunits: alpha(3), beta(3), gamma(1), delta(1), epsilon(1). CF(0) has four main subunits: a, b, b' and c.

The protein resides in the plastid. It is found in the chloroplast thylakoid membrane. It carries out the reaction ATP + H2O + 4 H(+)(in) = ADP + phosphate + 5 H(+)(out). Produces ATP from ADP in the presence of a proton gradient across the membrane. The alpha chain is a regulatory subunit. This is ATP synthase subunit alpha, chloroplastic from Thalassiosira pseudonana (Marine diatom).